The sequence spans 575 residues: Proline--tRNA ligase (575 aa).

It belongs to the class-II aminoacyl-tRNA synthetase family. ProS type 1 subfamily. As to quaternary structure, homodimer.

The protein localises to the cytoplasm. The enzyme catalyses tRNA(Pro) + L-proline + ATP = L-prolyl-tRNA(Pro) + AMP + diphosphate. Catalyzes the attachment of proline to tRNA(Pro) in a two-step reaction: proline is first activated by ATP to form Pro-AMP and then transferred to the acceptor end of tRNA(Pro). As ProRS can inadvertently accommodate and process non-cognate amino acids such as alanine and cysteine, to avoid such errors it has two additional distinct editing activities against alanine. One activity is designated as 'pretransfer' editing and involves the tRNA(Pro)-independent hydrolysis of activated Ala-AMP. The other activity is designated 'posttransfer' editing and involves deacylation of mischarged Ala-tRNA(Pro). The misacylated Cys-tRNA(Pro) is not edited by ProRS. This is Proline--tRNA ligase from Saccharophagus degradans (strain 2-40 / ATCC 43961 / DSM 17024).